The sequence spans 190 residues: Xanthine phosphoribosyltransferase (190 aa).

Residues Leu-20 and Asn-27 each contribute to the xanthine site. Ala-129 to Ala-133 is a binding site for 5-phospho-alpha-D-ribose 1-diphosphate. Lys-157 lines the xanthine pocket.

The protein belongs to the purine/pyrimidine phosphoribosyltransferase family. Xpt subfamily. Homodimer.

It is found in the cytoplasm. It carries out the reaction XMP + diphosphate = xanthine + 5-phospho-alpha-D-ribose 1-diphosphate. It participates in purine metabolism; XMP biosynthesis via salvage pathway; XMP from xanthine: step 1/1. Converts the preformed base xanthine, a product of nucleic acid breakdown, to xanthosine 5'-monophosphate (XMP), so it can be reused for RNA or DNA synthesis. The polypeptide is Xanthine phosphoribosyltransferase (Laribacter hongkongensis (strain HLHK9)).